The following is a 280-amino-acid chain: MNENMIECKNVVYKYEKAEEESKVAVDNVNLDIKKGEFLVVLGHNGSGKSTLSKHMNALLLPSEGTVYVSGMDTKDESNIWKIRNNAGMVFQNPDNQLVATIVEEDVAFGPENLGIAPDEIRSRVDEALKRVNMYEYRRYAPHLLSGGQKQRIAIAGILAMRPECIIFDEPTAMLDPSGRKEVVNTIKELNERYGITIILITHYMEEAVEADRIVVMDKGKIVMEGTPREIFSNVPLMKNIGLDVPQMTELAYELQNSGVNIASDILTIDEMVNALCQLK.

One can recognise an ABC transporter domain in the interval 6 to 244; it reads IECKNVVYKY…VPLMKNIGLD (239 aa). Position 43-50 (43-50) interacts with ATP; that stretch reads GHNGSGKS.

It belongs to the ABC transporter superfamily. Energy-coupling factor EcfA family. Forms a stable energy-coupling factor (ECF) transporter complex composed of 2 membrane-embedded substrate-binding proteins (S component), 2 ATP-binding proteins (A component) and 2 transmembrane proteins (T component).

It is found in the cell membrane. Its function is as follows. ATP-binding (A) component of a common energy-coupling factor (ECF) ABC-transporter complex. Unlike classic ABC transporters this ECF transporter provides the energy necessary to transport a number of different substrates. The chain is Energy-coupling factor transporter ATP-binding protein EcfA1 from Clostridium novyi (strain NT).